The primary structure comprises 88 residues: Putative membrane protein insertion efficiency factor (88 aa).

This sequence belongs to the UPF0161 family.

Its subcellular location is the cell inner membrane. Could be involved in insertion of integral membrane proteins into the membrane. The chain is Putative membrane protein insertion efficiency factor from Koribacter versatilis (strain Ellin345).